A 208-amino-acid chain; its full sequence is Fibroblast growth factor-binding protein 2 (208 aa).

The first 19 residues, methionine 1 to glycine 19, serve as a signal peptide directing secretion. 3 disulfide bridges follow: cysteine 43–cysteine 59, cysteine 68–cysteine 102, and cysteine 77–cysteine 113. Residues glutamate 130–threonine 181 are disordered. Cysteines 191 and 199 form a disulfide.

The protein belongs to the fibroblast growth factor-binding protein family.

The protein resides in the secreted. The protein localises to the extracellular space. This chain is Fibroblast growth factor-binding protein 2 (FGFBP2), found in Gallus gallus (Chicken).